The chain runs to 235 residues: Probable transcriptional regulatory protein Cj1172c (235 aa).

It belongs to the TACO1 family.

Its subcellular location is the cytoplasm. The sequence is that of Probable transcriptional regulatory protein Cj1172c from Campylobacter jejuni subsp. jejuni serotype O:2 (strain ATCC 700819 / NCTC 11168).